The following is a 167-amino-acid chain: Effector CFEM8 (167 aa).

The first 17 residues, 1-17 (MQFSIVVMAALASLASA), serve as a signal peptide directing secretion. Residues 18–112 (QSMDGIPTCA…TPAAAAPYPT (95 aa)) enclose the CFEM domain. Cystine bridges form between C26–C68, C30–C63, C40–C47, and C49–C85. D44 contributes to the heme binding site. 2 N-linked (GlcNAc...) asparagine glycosylation sites follow: N117 and N135. G143 carries GPI-anchor amidated glycine lipidation. A propeptide spans 144–167 (SAPQNVAGGLAGIFGLVVAAAFAL) (removed in mature form).

The protein belongs to the RBT5 family.

The protein resides in the cell membrane. It is found in the secreted. It localises to the host nucleus. Its subcellular location is the host cell membrane. In terms of biological role, appears to function during host infection, and may play a role in suppressing the host immune response. This is Effector CFEM8 from Marssonina brunnea f. sp. multigermtubi (strain MB_m1) (Marssonina leaf spot fungus).